The sequence spans 380 residues: Cytochrome b (380 aa).

Helical transmembrane passes span 34 to 54 (FGSL…LLAM), 78 to 99 (WLIR…FLHI), 114 to 134 (WNTG…GYVL), and 179 to 199 (FFAL…IHLI). The heme b site is built by histidine 84 and histidine 98. The heme b site is built by histidine 183 and histidine 197. Histidine 202 provides a ligand contact to a ubiquinone. 4 consecutive transmembrane segments (helical) span residues 227–247 (LKDI…ALFS), 289–309 (LGGV…PFLH), 321–341 (LSQT…WVGS), and 348–368 (FIII…ILFP).

The protein belongs to the cytochrome b family. In terms of assembly, the cytochrome bc1 complex contains 11 subunits: 3 respiratory subunits (MT-CYB, CYC1 and UQCRFS1), 2 core proteins (UQCRC1 and UQCRC2) and 6 low-molecular weight proteins (UQCRH/QCR6, UQCRB/QCR7, UQCRQ/QCR8, UQCR10/QCR9, UQCR11/QCR10 and a cleavage product of UQCRFS1). This cytochrome bc1 complex then forms a dimer. It depends on heme b as a cofactor.

It is found in the mitochondrion inner membrane. Functionally, component of the ubiquinol-cytochrome c reductase complex (complex III or cytochrome b-c1 complex) that is part of the mitochondrial respiratory chain. The b-c1 complex mediates electron transfer from ubiquinol to cytochrome c. Contributes to the generation of a proton gradient across the mitochondrial membrane that is then used for ATP synthesis. This Tragopan temminckii (Temminck's tragopan) protein is Cytochrome b (MT-CYB).